The primary structure comprises 209 residues: Protein-L-isoaspartate O-methyltransferase (209 aa).

The active site involves Ser-59.

This sequence belongs to the methyltransferase superfamily. L-isoaspartyl/D-aspartyl protein methyltransferase family. As to quaternary structure, monomer.

The protein resides in the cytoplasm. The enzyme catalyses [protein]-L-isoaspartate + S-adenosyl-L-methionine = [protein]-L-isoaspartate alpha-methyl ester + S-adenosyl-L-homocysteine. In terms of biological role, catalyzes the methyl esterification of L-isoaspartyl residues in peptides and proteins that result from spontaneous decomposition of normal L-aspartyl and L-asparaginyl residues. It plays a role in the repair and/or degradation of damaged proteins. The chain is Protein-L-isoaspartate O-methyltransferase (pcm) from Helicobacter pylori (strain J99 / ATCC 700824) (Campylobacter pylori J99).